A 91-amino-acid chain; its full sequence is Protein transport protein Sec61 subunit beta (91 aa).

The disordered stretch occupies residues 1 to 45 (MSTSAQVPGGPAAQMKRRNNAQRQEAKASQRPTSTRSVGAGGSSS). The Cytoplasmic portion of the chain corresponds to 1 to 62 (MSTSAQVPGG…DESQGLKVDP (62 aa)). Polar residues predominate over residues 30-45 (QRPTSTRSVGAGGSSS). The chain crosses the membrane as a helical span at residues 63 to 83 (VVVMVLSLGFIFSVVALHILA).

It belongs to the SEC61-beta family. Heterotrimeric complex composed of SEC61, SEB1 and SSS1.

The protein resides in the endoplasmic reticulum membrane. Necessary for protein translocation in the endoplasmic reticulum. The polypeptide is Protein transport protein Sec61 subunit beta (SBH1) (Yarrowia lipolytica (strain CLIB 122 / E 150) (Yeast)).